We begin with the raw amino-acid sequence, 101 residues long: Small ribosomal subunit protein bS18c (101 aa).

This sequence belongs to the bacterial ribosomal protein bS18 family. In terms of assembly, part of the 30S ribosomal subunit.

It is found in the plastid. It localises to the chloroplast. This Gossypium barbadense (Sea Island cotton) protein is Small ribosomal subunit protein bS18c.